The primary structure comprises 363 residues: S-methylmethionine--homocysteine S-methyltransferase BHMT2 (363 aa).

The Hcy-binding domain occupies 11-305 (KGILERLDSG…YHIRAIAEEL (295 aa)). 3 residues coordinate Zn(2+): Cys208, Cys290, and Cys291. Ser321 is modified (phosphoserine).

As to quaternary structure, homotetramer. Requires Zn(2+) as cofactor. Expressed in fetal heart, lung, liver, kidney and eye.

It catalyses the reaction S-methyl-L-methionine + L-homocysteine = 2 L-methionine + H(+). Its pathway is amino-acid biosynthesis; L-methionine biosynthesis via de novo pathway; L-methionine from L-homocysteine (BhmT route): step 1/1. In terms of biological role, involved in the regulation of homocysteine metabolism. Converts homocysteine to methionine using S-methylmethionine (SMM) as a methyl donor. This Mus musculus (Mouse) protein is S-methylmethionine--homocysteine S-methyltransferase BHMT2 (Bhmt2).